The following is a 134-amino-acid chain: Replication enhancer protein (134 aa).

It belongs to the geminiviridae replication enhancer protein family. As to quaternary structure, homooligomer. Interacts with the replication-associated protein (REP). Interacts with host proliferating cell nuclear antigen (PCNA). Interacts with host retinoblastoma-related protein 1 (RBR1), and may thereby deregulate the host cell cycle. Oligomerization and interaction with PCNA are necessary for optimal replication enhancement.

Functionally, increases viral DNA accumulation. Enhances infectivity and symptom expression. In Cynanchum acutum (Tomato), this protein is Replication enhancer protein.